The sequence spans 345 residues: Leucine-rich repeat-containing protein 69 (345 aa).

LRR repeat units lie at residues 13-34 (KAKT…VGCL), 36-58 (SLTE…SALC), 59-80 (RLRV…IKYL), 82-103 (CLER…ALDG), 106-127 (NLLF…IYKL), 129-151 (SLET…CFLQ), 152-173 (NLQE…LSYL), 175-196 (NLKE…ICKL), 198-219 (KLKI…MHRV), and 220-241 (PLTE…FARQ).

The protein belongs to the LRRC69 family.

The chain is Leucine-rich repeat-containing protein 69 (lrrc69) from Xenopus laevis (African clawed frog).